The following is a 318-amino-acid chain: Methionyl-tRNA formyltransferase (318 aa).

(6S)-5,6,7,8-tetrahydrofolate is bound at residue 120 to 123; it reads SLLP.

Belongs to the Fmt family.

It carries out the reaction L-methionyl-tRNA(fMet) + (6R)-10-formyltetrahydrofolate = N-formyl-L-methionyl-tRNA(fMet) + (6S)-5,6,7,8-tetrahydrofolate + H(+). Functionally, attaches a formyl group to the free amino group of methionyl-tRNA(fMet). The formyl group appears to play a dual role in the initiator identity of N-formylmethionyl-tRNA by promoting its recognition by IF2 and preventing the misappropriation of this tRNA by the elongation apparatus. In Variovorax paradoxus (strain S110), this protein is Methionyl-tRNA formyltransferase.